The primary structure comprises 336 residues: Dihydroorotate dehydrogenase (quinone) (336 aa).

FMN contacts are provided by residues 62-66 (AGLDK) and threonine 86. Substrate is bound at residue lysine 66. 111-115 (NRMGF) is a substrate binding site. The FMN site is built by asparagine 139 and asparagine 172. Asparagine 172 is a binding site for substrate. The active-site Nucleophile is serine 175. Position 177 (asparagine 177) interacts with substrate. Positions 217 and 245 each coordinate FMN. 246–247 (NT) lines the substrate pocket. Residues glycine 268, glycine 297, and 318–319 (YS) contribute to the FMN site.

Belongs to the dihydroorotate dehydrogenase family. Type 2 subfamily. Monomer. Requires FMN as cofactor.

Its subcellular location is the cell membrane. It carries out the reaction (S)-dihydroorotate + a quinone = orotate + a quinol. Its pathway is pyrimidine metabolism; UMP biosynthesis via de novo pathway; orotate from (S)-dihydroorotate (quinone route): step 1/1. Catalyzes the conversion of dihydroorotate to orotate with quinone as electron acceptor. This Pectobacterium atrosepticum (strain SCRI 1043 / ATCC BAA-672) (Erwinia carotovora subsp. atroseptica) protein is Dihydroorotate dehydrogenase (quinone).